We begin with the raw amino-acid sequence, 140 residues long: 3-hydroxyacyl-[acyl-carrier-protein] dehydratase FabZ (140 aa).

The active site involves His-48.

It belongs to the thioester dehydratase family. FabZ subfamily.

It is found in the cytoplasm. The catalysed reaction is a (3R)-hydroxyacyl-[ACP] = a (2E)-enoyl-[ACP] + H2O. In terms of biological role, involved in unsaturated fatty acids biosynthesis. Catalyzes the dehydration of short chain beta-hydroxyacyl-ACPs and long chain saturated and unsaturated beta-hydroxyacyl-ACPs. This Caldicellulosiruptor bescii (strain ATCC BAA-1888 / DSM 6725 / KCTC 15123 / Z-1320) (Anaerocellum thermophilum) protein is 3-hydroxyacyl-[acyl-carrier-protein] dehydratase FabZ.